A 138-amino-acid chain; its full sequence is Thyrotropin subunit beta (138 aa).

Residues methionine 1–serine 20 form the signal peptide. Cystine bridges form between cysteine 22/cysteine 72, cysteine 36/cysteine 87, cysteine 39/cysteine 125, cysteine 47/cysteine 103, cysteine 51/cysteine 105, and cysteine 108/cysteine 115. The N-linked (GlcNAc...) asparagine glycan is linked to asparagine 43. Residues valine 133–isoleucine 138 constitute a propeptide that is removed on maturation.

It belongs to the glycoprotein hormones subunit beta family. Heterodimer of a common alpha chain and a unique beta chain which confers biological specificity to thyrotropin, lutropin, follitropin and gonadotropin.

It localises to the secreted. In terms of biological role, indispensable for the control of thyroid structure and metabolism. The protein is Thyrotropin subunit beta (TSHB) of Sus scrofa (Pig).